We begin with the raw amino-acid sequence, 340 residues long: DNA repair protein RAD51 homolog B (340 aa).

Positions 1 to 22 (MSSSSAHQKASPPIEEEATEHG) are disordered. The HhH domain maps to 49–78 (TVESVAYSPRKDLLQIKGISEAKVDKIIEA). 128–135 (GEFRSGKT) contacts ATP.

This sequence belongs to the RecA family. RAD51 subfamily. In terms of assembly, self-associates and may interact with XRCC3 homolog. Highly expressed in mitotic and meiotic tissues, but low levels in differentiated tissues.

The protein localises to the nucleus. Binds to single and double-stranded DNA and exhibits DNA-dependent ATPase activity. Unwinds duplex DNA. Component of the meiotic recombination pathway. Seems to play a role in mediating chromosome homology search, chromosome pairing and synapsis at early stages and probably chromosome crossing-over at later stages in meiosis. Probably is involved in the repair of meiotic double strand breaks (DBSs) and in homologous recombination. This is DNA repair protein RAD51 homolog B (RAD51B) from Zea mays (Maize).